The following is a 253-amino-acid chain: Probable transcriptional regulatory protein A1G_04400 (253 aa).

The disordered stretch occupies residues 1 to 21 (MAGHSKFKNIQHRKGAQDKKR).

Belongs to the TACO1 family.

Its subcellular location is the cytoplasm. The polypeptide is Probable transcriptional regulatory protein A1G_04400 (Rickettsia rickettsii (strain Sheila Smith)).